The sequence spans 413 residues: MKLLGWMHRKLRQNSNDVFKEFNNAAGGTCNCITGLAASDPATFLATANEYFTADNDFTNNHPSSPAADLFTFGGSGLLTIGTLGIAAVAVSADADEVDYDVDADADSDFDDNDDTAGDDEDQVDSAVTPTFTYAAPPPIEDATVVEKAAVAVVEAIAEKDDDTTTEDDLMVVSAELEKVLGGRNSGTAGDLVASARVSFAMGVDCPLQGFLFGSPVSDAESRLEQPRDSNGGRRTSLGELFMRTRFAEEKVALVAVEEGEDGGDIGAGGERDDRKAGKGGGGHKTTKKRSAKDEKVPRGDGAQASATVTKSKFHKILQIFHRKVYPESAALARNLTKKSRKRGSGAYHKPEPAASKLRCLKEQRAPGFGCCASRASFGGAASPIDGDDDDELNGSKSGHWIKTDAEYLVLEL.

A helical membrane pass occupies residues 71-91 (FTFGGSGLLTIGTLGIAAVAV). The span at 103-124 (DADADSDFDDNDDTAGDDEDQV) shows a compositional bias: acidic residues. Disordered stretches follow at residues 103–127 (DADA…VDSA) and 261–308 (EDGG…ASAT). Short sequence motifs (nuclear localization signal) lie at residues 275–298 (RKAG…EKVP) and 338–345 (KKSRKRGS).

This sequence belongs to the LAZY family. Expressed in the node of the stem, initiating leaf founder cells, young leaf primordia, tips of axillary meristems, spikelet pair meristems of developing tassels and ears, male flower primordia, tassels, ears, silks and seeds. Expressed in leaf sheaths, leaf pulvinus and shoot apical meristem (SAM).

Its subcellular location is the cell membrane. The protein localises to the nucleus. Its function is as follows. Involved in the regulation of shoot gravitropism, and tassel and ear development through the regulation of polar auxin transport (PAT) and auxin signaling. Acts as a negative regulator of basipetal PAT, but positive regulator of lateral auxin transport. Involved in the regulation of shoot gravitropism and leaf angle through the regulation of cell development. This Zea mays (Maize) protein is Protein LAZY 1.